The primary structure comprises 518 residues: D-aminopeptidase (518 aa).

S62 serves as the catalytic Nucleophile. K65 serves as the catalytic Proton donor/acceptor. The important for specificity stretch occupies residues 477 to 487 (QRSMDAPSPGE). D481 contacts substrate.

The protein belongs to the peptidase S12 family. In terms of assembly, homodimer.

The catalysed reaction is Release of an N-terminal D-amino acid from a peptide, Xaa-|-Yaa-, in which Xaa is preferably D-Ala, D-Ser or D-Thr. D-amino acid amides and methyl esters also are hydrolyzed, as is glycine amide.. Its activity is regulated as follows. Inhibited by beta-lactam compounds such as 6-aminopenicillic acid, 7-aminocephalosporanic acid, benzylpenicillin and ampicillin. Inhibited by p-chloromercuribenzoate. Hydrolyzes N-terminal residues in D-amino acid-containing peptides. In Brucella ovis (strain ATCC 25840 / 63/290 / NCTC 10512), this protein is D-aminopeptidase.